A 213-amino-acid polypeptide reads, in one-letter code: Protein-L-isoaspartate O-methyltransferase (213 aa).

Ser-60 is an active-site residue.

This sequence belongs to the methyltransferase superfamily. L-isoaspartyl/D-aspartyl protein methyltransferase family.

Its subcellular location is the cytoplasm. The catalysed reaction is [protein]-L-isoaspartate + S-adenosyl-L-methionine = [protein]-L-isoaspartate alpha-methyl ester + S-adenosyl-L-homocysteine. Functionally, catalyzes the methyl esterification of L-isoaspartyl residues in peptides and proteins that result from spontaneous decomposition of normal L-aspartyl and L-asparaginyl residues. It plays a role in the repair and/or degradation of damaged proteins. The sequence is that of Protein-L-isoaspartate O-methyltransferase from Roseobacter denitrificans (strain ATCC 33942 / OCh 114) (Erythrobacter sp. (strain OCh 114)).